The chain runs to 208 residues: V-type ATP synthase subunit E (208 aa).

Belongs to the V-ATPase E subunit family.

Functionally, produces ATP from ADP in the presence of a proton gradient across the membrane. The polypeptide is V-type ATP synthase subunit E (atpE) (Chlamydia muridarum (strain MoPn / Nigg)).